Here is a 98-residue protein sequence, read N- to C-terminus: Integration host factor subunit alpha (98 aa).

The tract at residues 51 to 71 is disordered; it reads NFDLRDKNERPGRNPKTGEDI. Basic and acidic residues predominate over residues 53–69; sequence DLRDKNERPGRNPKTGE.

Belongs to the bacterial histone-like protein family. Heterodimer of an alpha and a beta chain.

This protein is one of the two subunits of integration host factor, a specific DNA-binding protein that functions in genetic recombination as well as in transcriptional and translational control. The chain is Integration host factor subunit alpha from Vibrio campbellii (strain ATCC BAA-1116).